The following is a 129-amino-acid chain: Cytochrome c oxidase subunit 5B, mitochondrial (129 aa).

The transit peptide at 1-31 (MASRLLRGVGALAAQALRAHGPRGVAATRSM) directs the protein to the mitochondrion. N6-acetyllysine is present on residues lysine 68 and lysine 86. Residues cysteine 91, cysteine 93, cysteine 113, and cysteine 116 each contribute to the Zn(2+) site. Lysine 121 is subject to N6-acetyllysine.

It belongs to the cytochrome c oxidase subunit 5B family. As to quaternary structure, component of the cytochrome c oxidase (complex IV, CIV), a multisubunit enzyme composed of 14 subunits. The complex is composed of a catalytic core of 3 subunits MT-CO1, MT-CO2 and MT-CO3, encoded in the mitochondrial DNA, and 11 supernumerary subunits COX4I, COX5A, COX5B, COX6A, COX6B, COX6C, COX7A, COX7B, COX7C, COX8 and NDUFA4, which are encoded in the nuclear genome. The complex exists as a monomer or a dimer and forms supercomplexes (SCs) in the inner mitochondrial membrane with NADH-ubiquinone oxidoreductase (complex I, CI) and ubiquinol-cytochrome c oxidoreductase (cytochrome b-c1 complex, complex III, CIII), resulting in different assemblies (supercomplex SCI(1)III(2)IV(1) and megacomplex MCI(2)III(2)IV(2)).

It localises to the mitochondrion inner membrane. The protein operates within energy metabolism; oxidative phosphorylation. In terms of biological role, component of the cytochrome c oxidase, the last enzyme in the mitochondrial electron transport chain which drives oxidative phosphorylation. The respiratory chain contains 3 multisubunit complexes succinate dehydrogenase (complex II, CII), ubiquinol-cytochrome c oxidoreductase (cytochrome b-c1 complex, complex III, CIII) and cytochrome c oxidase (complex IV, CIV), that cooperate to transfer electrons derived from NADH and succinate to molecular oxygen, creating an electrochemical gradient over the inner membrane that drives transmembrane transport and the ATP synthase. Cytochrome c oxidase is the component of the respiratory chain that catalyzes the reduction of oxygen to water. Electrons originating from reduced cytochrome c in the intermembrane space (IMS) are transferred via the dinuclear copper A center (CU(A)) of subunit 2 and heme A of subunit 1 to the active site in subunit 1, a binuclear center (BNC) formed by heme A3 and copper B (CU(B)). The BNC reduces molecular oxygen to 2 water molecules using 4 electrons from cytochrome c in the IMS and 4 protons from the mitochondrial matrix. This is Cytochrome c oxidase subunit 5B, mitochondrial (Cox5b) from Rattus norvegicus (Rat).